Reading from the N-terminus, the 688-residue chain is MPRKFPLEKTRNIGIMAHIDAGKTTTTERILFHTGKIHKIGETHDGDSQMDWMKQEQERGITITSAATTAFWKEHRINIIDTPGHVDFTVEVSRSLRVLDGAVAVIDAKAGVEPQTETVWRQATEYKVPRIIFVNKMDKIGASFDYAVKTLYQRLGINASPIQLPIGSENEFKGIVDLLEMTGVEFLGTSDEKFKTIEIPEYMKEFAQNKRIELIEKWHNYDEELMMDYLNGKEITVEKLKNVIRQATLKADFFPVLCGSAFKNKGVKKILDAIIDYLPSPMDVSSIVGCNFENKEIIRKTSDNEPFTALAFKVMTDPYVGKLTFFRVYAGTIKTGSYVTNATKQVKERLGRLLQMHANSREEIKEVYAGDIVAAVGLKNTTPGDTLTSINDDIILESMNFPEPVIEIAIEPKTKADQDKIGIALSKLSEEHPTFKIYTNRETAQTIIAAMGELHLEIILDRLKTEFKVEANVNQPQVAYRETLTKISTTEGKFIRQSGGRGQYGHVIIRFEPNSDKGNEFINKIVGGVIPKEYIPAVKKGLEESLSNGILAGFPLIDVKATLIDGSYHDVDSSEIAFKIAASMALKQTKNEGNLVILEPIMEVEIITPNDYIGNVIGDLTSRRGKLENQDSRENTVIIKALVPLSEMFGYATILRSNTQGRASFIMQFLKYERAPKNIAEEIIKKRN.

One can recognise a tr-type G domain in the interval Glu8–Met282. Residues Ala17 to Thr24, Asp81 to His85, and Asn135 to Asp138 each bind GTP.

The protein belongs to the TRAFAC class translation factor GTPase superfamily. Classic translation factor GTPase family. EF-G/EF-2 subfamily.

The protein resides in the cytoplasm. In terms of biological role, catalyzes the GTP-dependent ribosomal translocation step during translation elongation. During this step, the ribosome changes from the pre-translocational (PRE) to the post-translocational (POST) state as the newly formed A-site-bound peptidyl-tRNA and P-site-bound deacylated tRNA move to the P and E sites, respectively. Catalyzes the coordinated movement of the two tRNA molecules, the mRNA and conformational changes in the ribosome. This is Elongation factor G (fusA) from Apple proliferation phytoplasma.